We begin with the raw amino-acid sequence, 268 residues long: Glutamate racemase (268 aa).

Substrate contacts are provided by residues D14–S15 and Y46–G47. C78 acts as the Proton donor/acceptor in catalysis. N79–S80 is a binding site for substrate. C190 functions as the Proton donor/acceptor in the catalytic mechanism. T191–H192 lines the substrate pocket.

The protein belongs to the aspartate/glutamate racemases family.

It carries out the reaction L-glutamate = D-glutamate. It participates in cell wall biogenesis; peptidoglycan biosynthesis. Provides the (R)-glutamate required for cell wall biosynthesis. In Treponema pallidum (strain Nichols), this protein is Glutamate racemase.